The following is a 235-amino-acid chain: Sugar fermentation stimulation protein homolog (235 aa).

It belongs to the SfsA family.

The polypeptide is Sugar fermentation stimulation protein homolog (Maricaulis maris (strain MCS10) (Caulobacter maris)).